A 156-amino-acid polypeptide reads, in one-letter code: MAENPIYGPFFGVMGAASAIIFSALGAAYGTAKSGTGIAAMSVMRPELIMKSIIPVVMAGIIAIYGLVVAVLIAGSLDAPSNNYTLYKGFIHLGAGLAVGFSGLAAGFAIGIVGDAGVRGTAQQPRLFVGMILILIFAEVLGLYGLIVAIYLYTKQ.

Over 1 to 7 (MAENPIY) the chain is Lumenal. A helical transmembrane segment spans residues 8–30 (GPFFGVMGAASAIIFSALGAAYG). Topologically, residues 31 to 52 (TAKSGTGIAAMSVMRPELIMKS) are cytoplasmic. The chain crosses the membrane as a helical span at residues 53–73 (IIPVVMAGIIAIYGLVVAVLI). The Lumenal portion of the chain corresponds to 74–92 (AGSLDAPSNNYTLYKGFIH). Residues 93–114 (LGAGLAVGFSGLAAGFAIGIVG) form a helical membrane-spanning segment. Over 115–126 (DAGVRGTAQQPR) the chain is Cytoplasmic. A helical membrane pass occupies residues 127 to 152 (LFVGMILILIFAEVLGLYGLIVAIYL). The Lumenal portion of the chain corresponds to 153-156 (YTKQ).

This sequence belongs to the V-ATPase proteolipid subunit family. In terms of assembly, V-ATPase is a heteromultimeric enzyme made up of two complexes: the ATP-hydrolytic V1 complex and the proton translocation V0 complex. The V1 complex consists of three catalytic AB heterodimers that form a heterohexamer, three peripheral stalks each consisting of EG heterodimers, one central rotor including subunits D and F, and the regulatory subunits C and H. The proton translocation complex V0 consists of the proton transport subunit a, a ring of proteolipid subunits c9c'', rotary subunit d, subunits e and f, and the accessory subunits VhaAC45 and ATP6AP2.

Its subcellular location is the membrane. Its function is as follows. Proton-conducting pore forming subunit of the V0 complex of vacuolar(H+)-ATPase (V-ATPase), a multisubunit enzyme composed of a peripheral complex (V1) that hydrolyzes ATP and a membrane integral complex (V0) that translocates protons. V-ATPase is responsible for acidifying and maintaining the pH of intracellular compartments and in some cell types, is targeted to the plasma membrane, where it is responsible for acidifying the extracellular environment. The polypeptide is V-type proton ATPase 16 kDa proteolipid subunit c (VHA16) (Heliothis virescens (Tobacco budworm moth)).